The chain runs to 199 residues: Guanylate kinase (199 aa).

The Guanylate kinase-like domain occupies 20 to 198 (GKLIILTGPS…ALQAIEVALF (179 aa)). 27–34 (GPSGVGKG) contacts ATP.

The protein belongs to the guanylate kinase family.

It is found in the cytoplasm. The enzyme catalyses GMP + ATP = GDP + ADP. Essential for recycling GMP and indirectly, cGMP. The chain is Guanylate kinase from Nostoc sp. (strain PCC 7120 / SAG 25.82 / UTEX 2576).